The chain runs to 216 residues: Adenylate kinase (216 aa).

10-15 (GAGKGT) is a binding site for ATP. The NMP stretch occupies residues 30–59 (STGDMLRAAVNAGTEVGKRAKAVMDAGKLV). AMP contacts are provided by residues Thr31, Arg36, 57–59 (KLV), 85–88 (GFPR), and Gln92. Residues 126–163 (GRYTCAQCGTVYHDTDKVPVEEGVCDKCGSTHFKRRPD) form an LID region. Arg127 is an ATP binding site. Residues Cys130 and Cys133 each contribute to the Zn(2+) site. 136–137 (VY) lines the ATP pocket. Positions 150 and 153 each coordinate Zn(2+). Residues Arg160 and Arg172 each contribute to the AMP site. Residue Ala200 coordinates ATP.

The protein belongs to the adenylate kinase family. In terms of assembly, monomer.

The protein resides in the cytoplasm. It catalyses the reaction AMP + ATP = 2 ADP. It participates in purine metabolism; AMP biosynthesis via salvage pathway; AMP from ADP: step 1/1. Its function is as follows. Catalyzes the reversible transfer of the terminal phosphate group between ATP and AMP. Plays an important role in cellular energy homeostasis and in adenine nucleotide metabolism. This chain is Adenylate kinase, found in Rhizobium etli (strain ATCC 51251 / DSM 11541 / JCM 21823 / NBRC 15573 / CFN 42).